The sequence spans 1058 residues: Carbamoyl phosphate synthase large chain (1058 aa).

Residues 1–401 (MPKRTDIQKI…SLLKACRSLE (401 aa)) form a carboxyphosphate synthetic domain region. The ATP site is built by R129, R169, G175, G176, R208, I210, E215, G241, I242, H243, Q284, and E298. An ATP-grasp 1 domain is found at 133 to 327 (KQLMEELEQP…IAKLAAKIAV (195 aa)). 3 residues coordinate Mg(2+): Q284, E298, and N300. The Mn(2+) site is built by Q284, E298, and N300. The interval 402 to 546 (IGVHHNEIPE…YSTYGWENES (145 aa)) is oligomerization domain. The interval 547-929 (IRSDKESVLV…ALYKAFEASY (383 aa)) is carbamoyl phosphate synthetic domain. The 191-residue stretch at 671–861 (EQALKELDIP…MAQVATKLIL (191 aa)) folds into the ATP-grasp 2 domain. Residues R707, S746, I748, E752, G777, V778, H779, S780, Q820, and E832 each coordinate ATP. The Mg(2+) site is built by Q820, E832, and N834. The Mn(2+) site is built by Q820, E832, and N834. The MGS-like domain maps to 930 to 1058 (LHLPTFGNVV…ESRSFVTEAI (129 aa)). Residues 930 to 1058 (LHLPTFGNVV…ESRSFVTEAI (129 aa)) form an allosteric domain region.

It belongs to the CarB family. As to quaternary structure, composed of two chains; the small (or glutamine) chain promotes the hydrolysis of glutamine to ammonia, which is used by the large (or ammonia) chain to synthesize carbamoyl phosphate. Tetramer of heterodimers (alpha,beta)4. It depends on Mg(2+) as a cofactor. Mn(2+) serves as cofactor.

It carries out the reaction hydrogencarbonate + L-glutamine + 2 ATP + H2O = carbamoyl phosphate + L-glutamate + 2 ADP + phosphate + 2 H(+). The enzyme catalyses hydrogencarbonate + NH4(+) + 2 ATP = carbamoyl phosphate + 2 ADP + phosphate + 2 H(+). It participates in amino-acid biosynthesis; L-arginine biosynthesis; carbamoyl phosphate from bicarbonate: step 1/1. The protein operates within pyrimidine metabolism; UMP biosynthesis via de novo pathway; (S)-dihydroorotate from bicarbonate: step 1/3. Its function is as follows. Large subunit of the glutamine-dependent carbamoyl phosphate synthetase (CPSase). CPSase catalyzes the formation of carbamoyl phosphate from the ammonia moiety of glutamine, carbonate, and phosphate donated by ATP, constituting the first step of 2 biosynthetic pathways, one leading to arginine and/or urea and the other to pyrimidine nucleotides. The large subunit (synthetase) binds the substrates ammonia (free or transferred from glutamine from the small subunit), hydrogencarbonate and ATP and carries out an ATP-coupled ligase reaction, activating hydrogencarbonate by forming carboxy phosphate which reacts with ammonia to form carbamoyl phosphate. In Streptococcus pneumoniae (strain P1031), this protein is Carbamoyl phosphate synthase large chain.